The following is a 512-amino-acid chain: Maturase K (512 aa).

This sequence belongs to the intron maturase 2 family. MatK subfamily.

It is found in the plastid. Its subcellular location is the chloroplast. Its function is as follows. Usually encoded in the trnK tRNA gene intron. Probably assists in splicing its own and other chloroplast group II introns. This is Maturase K from Oenothera parviflora (Small-flowered evening primrose).